The primary structure comprises 249 residues: NAD(P)H-quinone oxidoreductase subunit T, chloroplastic (249 aa).

The transit peptide at 1–45 directs the protein to the chloroplast; the sequence is MAYATSTYARTSCIILPKIQNGAHFTDDTKAFRRITARRVTRIYA. The disordered stretch occupies residues 44–84; sequence YASQGPTKPSKPSPGVDTRIHWESPDEGWIGGRSDPAKSVD. The 67-residue stretch at 106–172 folds into the J domain; the sequence is SHYQFLGVST…ETRRFYDWTL (67 aa). A helical membrane pass occupies residues 224–244; the sequence is LTFDILIVLFAVCCIAFVIVF.

In terms of assembly, part of the chloroplast NDH complex, composed of a mixture of chloroplast and nucleus encoded subunits. Component of the electron donor-binding subcomplex, at least composed of NDHS, NDHT and NDHU.

Its subcellular location is the plastid. The protein resides in the chloroplast thylakoid membrane. It catalyses the reaction a plastoquinone + NADH + (n+1) H(+)(in) = a plastoquinol + NAD(+) + n H(+)(out). The catalysed reaction is a plastoquinone + NADPH + (n+1) H(+)(in) = a plastoquinol + NADP(+) + n H(+)(out). In terms of biological role, NDH shuttles electrons from NAD(P)H:plastoquinone, via FMN and iron-sulfur (Fe-S) centers, to quinones in the photosynthetic chain and possibly in a chloroplast respiratory chain. The immediate electron acceptor for the enzyme in this species is believed to be plastoquinone. Couples the redox reaction to proton translocation, and thus conserves the redox energy in a proton gradient. Required for the accumulation of both the NDH subcomplex A and NDHS. In Arabidopsis thaliana (Mouse-ear cress), this protein is NAD(P)H-quinone oxidoreductase subunit T, chloroplastic.